The chain runs to 490 residues: Cytochrome P450 2C50 (490 aa).

Ser127 is modified (phosphoserine). N6-acetyllysine is present on residues Lys249 and Lys375. Cys435 is a binding site for heme.

It belongs to the cytochrome P450 family. Requires heme as cofactor. As to expression, expressed in heart and liver.

It localises to the endoplasmic reticulum membrane. The protein localises to the microsome membrane. It catalyses the reaction an organic molecule + reduced [NADPH--hemoprotein reductase] + O2 = an alcohol + oxidized [NADPH--hemoprotein reductase] + H2O + H(+). In terms of biological role, metabolizes arachidonic acid to several midchain and omega-terminal hydroxyeicosatetraenoic acids (HETE). The polypeptide is Cytochrome P450 2C50 (Mus musculus (Mouse)).